A 259-amino-acid chain; its full sequence is MIEARDLNVSIGGKRILSHVNFAAEPGIVTAIVGPNGSGKSTLIKTISGDLPYGGSITLNGQELARMKPAEAAMVRAVLPQSTTLSFPCTVREVVSLGIMRGYSAARDNCLPERALEKVDLAGFAGRFYQELSGGEQQRVQLARVLCQVWTPCLGQPRYLLLDEPVSSLDIKHQLIVLRIAREFAAAGGGVVAVLHDLNLTVAFAHHVVIMHQGRSVAGGTPEEVMQDALLSEVFDCQLKVGALPDGPTPFLLPQTAMV.

The 237-residue stretch at 2–238 (IEARDLNVSI…ALLSEVFDCQ (237 aa)) folds into the ABC transporter domain. ATP is bound at residue 34–41 (GPNGSGKS).

The protein belongs to the ABC transporter superfamily. Heme (hemin) importer (TC 3.A.1.14.5) family. In terms of assembly, the complex is composed of two ATP-binding proteins (HmuV), two transmembrane proteins (HmuU) and a solute-binding protein (HmuT).

The protein resides in the cell inner membrane. In terms of biological role, part of the ABC transporter complex HmuTUV involved in hemin import. Responsible for energy coupling to the transport system. This chain is Hemin import ATP-binding protein HmuV, found in Chelativorans sp. (strain BNC1).